The primary structure comprises 230 residues: Large ribosomal subunit protein uL1 (230 aa).

The protein belongs to the universal ribosomal protein uL1 family. In terms of assembly, part of the 50S ribosomal subunit.

Binds directly to 23S rRNA. The L1 stalk is quite mobile in the ribosome, and is involved in E site tRNA release. In terms of biological role, protein L1 is also a translational repressor protein, it controls the translation of the L11 operon by binding to its mRNA. The chain is Large ribosomal subunit protein uL1 from Nitrobacter winogradskyi (strain ATCC 25391 / DSM 10237 / CIP 104748 / NCIMB 11846 / Nb-255).